An 82-amino-acid chain; its full sequence is MVTIRLQRGGAKKRPFYQIVVADSRFSRDGRFIEKVGFFNPIAAGQEEKIRLDLPRVEHWVGQGASLSDRVAKLVKDARKAA.

This sequence belongs to the bacterial ribosomal protein bS16 family.

The protein is Small ribosomal subunit protein bS16 of Pseudoalteromonas translucida (strain TAC 125).